The chain runs to 143 residues: MAKKIQAYIKLQVKAGQANPSPPVGPALGQHGVNIMEFCKAFNARTQGMEPGLPTPVIITVYSDRSFTFETKSTPASVLLKKAAGISSGSSRPNTQKVGTVNRAQLEEIAKAKQADLTAADLEAAVRTIAGSARSMGLNVEGV.

Belongs to the universal ribosomal protein uL11 family. As to quaternary structure, part of the ribosomal stalk of the 50S ribosomal subunit. Interacts with L10 and the large rRNA to form the base of the stalk. L10 forms an elongated spine to which L12 dimers bind in a sequential fashion forming a multimeric L10(L12)X complex. One or more lysine residues are methylated.

Its function is as follows. Forms part of the ribosomal stalk which helps the ribosome interact with GTP-bound translation factors. This chain is Large ribosomal subunit protein uL11, found in Azotobacter vinelandii (strain DJ / ATCC BAA-1303).